The following is a 156-amino-acid chain: uncharacterized protein (156 aa).

Positions glutamate 11–leucine 156 constitute an N-acetyltransferase domain.

This sequence belongs to the acetyltransferase family. Homodimer.

This is an uncharacterized protein from Bacillus subtilis (strain 168).